Reading from the N-terminus, the 339-residue chain is Casein kinase II subunit alpha' (339 aa).

The 285-residue stretch at 50 to 334 (YEIINKIGRG…AKEAMDHKFF (285 aa)) folds into the Protein kinase domain. Residues 56–64 (IGRGKYSEV) and Lys79 contribute to the ATP site. Asp167 (proton acceptor) is an active-site residue.

It belongs to the protein kinase superfamily. Ser/Thr protein kinase family. CK2 subfamily. In terms of assembly, tetramer composed of an alpha chain, an alpha', one beta chain and one beta' chain. Interacts with FACT subunits POB3 and SPT16. Interacts with NAP1. Interacts with YTA7.

The enzyme catalyses L-seryl-[protein] + ATP = O-phospho-L-seryl-[protein] + ADP + H(+). It catalyses the reaction L-threonyl-[protein] + ATP = O-phospho-L-threonyl-[protein] + ADP + H(+). Catalytic subunit of a constitutively active serine/threonine-protein kinase complex that phosphorylates a large number of substrates containing acidic residues C-terminal to the phosphorylated serine or threonine. Phosphorylates YTA7 during S-phase to promote transcription of histones. The chain is Casein kinase II subunit alpha' from Saccharomyces cerevisiae (strain ATCC 204508 / S288c) (Baker's yeast).